The chain runs to 256 residues: MAKYRRVVVKLSGRAIAGSAEFGFDSNALEHLAREIIAVRQSGVEVAIVVGGGNLFRGNQSDRWGIDRVEADNIGMLGTVINSLLLRGKLTALGEDNLRVMTAVPVPAVAEPYIRLRAVHLLEKGATVILACGNGQPFLTTDYPAVQRALELGADAVLAAKDGVDGVYDSDPKINPEAQRFSRLSYDEVISRGLRVMDQSAFILARDFGIPLHIFDIEQQGAMTAICRGEHRGTVIDTTGGKAGSAALASSAETVV.

ATP is bound at residue 10–13 (KLSG). Gly52 is a UMP binding site. Residues Gly53 and Arg57 each coordinate ATP. UMP-binding positions include Asp72 and 134–141 (NGQPFLTT). Residues Tyr168 and Asp171 each coordinate ATP.

Belongs to the UMP kinase family. In terms of assembly, homohexamer.

The protein localises to the cytoplasm. The enzyme catalyses UMP + ATP = UDP + ADP. It participates in pyrimidine metabolism; CTP biosynthesis via de novo pathway; UDP from UMP (UMPK route): step 1/1. With respect to regulation, inhibited by UTP. Functionally, catalyzes the reversible phosphorylation of UMP to UDP. This is Uridylate kinase from Frankia alni (strain DSM 45986 / CECT 9034 / ACN14a).